The primary structure comprises 339 residues: UDP-N-acetylenolpyruvoylglucosamine reductase (339 aa).

Positions 18–189 (GIDVKARYFS…LRVRFALTRT (172 aa)) constitute an FAD-binding PCMH-type domain. The active site involves arginine 166. The active-site Proton donor is serine 239. Residue glutamate 335 is part of the active site.

Belongs to the MurB family. The cofactor is FAD.

The protein resides in the cytoplasm. It carries out the reaction UDP-N-acetyl-alpha-D-muramate + NADP(+) = UDP-N-acetyl-3-O-(1-carboxyvinyl)-alpha-D-glucosamine + NADPH + H(+). Its pathway is cell wall biogenesis; peptidoglycan biosynthesis. In terms of biological role, cell wall formation. This is UDP-N-acetylenolpyruvoylglucosamine reductase from Pseudomonas putida (strain ATCC 47054 / DSM 6125 / CFBP 8728 / NCIMB 11950 / KT2440).